The chain runs to 284 residues: Ribosomal RNA small subunit methyltransferase A (284 aa).

S-adenosyl-L-methionine is bound by residues asparagine 26, leucine 28, glycine 53, glutamate 74, aspartate 97, and asparagine 127.

It belongs to the class I-like SAM-binding methyltransferase superfamily. rRNA adenine N(6)-methyltransferase family. RsmA subfamily.

It localises to the cytoplasm. It carries out the reaction adenosine(1518)/adenosine(1519) in 16S rRNA + 4 S-adenosyl-L-methionine = N(6)-dimethyladenosine(1518)/N(6)-dimethyladenosine(1519) in 16S rRNA + 4 S-adenosyl-L-homocysteine + 4 H(+). Its function is as follows. Specifically dimethylates two adjacent adenosines (A1518 and A1519) in the loop of a conserved hairpin near the 3'-end of 16S rRNA in the 30S particle. May play a critical role in biogenesis of 30S subunits. This Anaeromyxobacter dehalogenans (strain 2CP-C) protein is Ribosomal RNA small subunit methyltransferase A.